Consider the following 619-residue polypeptide: Putative zinc metalloprotease CT_072 (619 aa).

His-20 lines the Zn(2+) pocket. Residue Glu-21 is part of the active site. Position 24 (His-24) interacts with Zn(2+). Transmembrane regions (helical) follow at residues Ile-103–Tyr-125, Val-558–Leu-580, and Ala-593–Leu-610.

Belongs to the peptidase M50B family. Requires Zn(2+) as cofactor.

The protein localises to the cell inner membrane. The protein is Putative zinc metalloprotease CT_072 of Chlamydia trachomatis serovar D (strain ATCC VR-885 / DSM 19411 / UW-3/Cx).